The primary structure comprises 261 residues: 1-(5-phosphoribosyl)-5-[(5-phosphoribosylamino)methylideneamino] imidazole-4-carboxamide isomerase (261 aa).

D7 functions as the Proton acceptor in the catalytic mechanism. D129 serves as the catalytic Proton donor.

It belongs to the HisA/HisF family.

The protein localises to the cytoplasm. It catalyses the reaction 1-(5-phospho-beta-D-ribosyl)-5-[(5-phospho-beta-D-ribosylamino)methylideneamino]imidazole-4-carboxamide = 5-[(5-phospho-1-deoxy-D-ribulos-1-ylimino)methylamino]-1-(5-phospho-beta-D-ribosyl)imidazole-4-carboxamide. The protein operates within amino-acid biosynthesis; L-histidine biosynthesis; L-histidine from 5-phospho-alpha-D-ribose 1-diphosphate: step 4/9. The polypeptide is 1-(5-phosphoribosyl)-5-[(5-phosphoribosylamino)methylideneamino] imidazole-4-carboxamide isomerase (Colwellia psychrerythraea (strain 34H / ATCC BAA-681) (Vibrio psychroerythus)).